We begin with the raw amino-acid sequence, 371 residues long: tRNA-specific 2-thiouridylase MnmA (371 aa).

ATP-binding positions include 14-21 (GMSGGVDS) and M40. An interaction with target base in tRNA region spans residues 100–102 (NPD). Catalysis depends on C105, which acts as the Nucleophile. A disulfide bond links C105 and C205. G129 lines the ATP pocket. The interval 155 to 157 (KDQ) is interaction with tRNA. Residue C205 is the Cysteine persulfide intermediate of the active site. The tract at residues 321–322 (RY) is interaction with tRNA.

This sequence belongs to the MnmA/TRMU family.

The protein localises to the cytoplasm. It carries out the reaction S-sulfanyl-L-cysteinyl-[protein] + uridine(34) in tRNA + AH2 + ATP = 2-thiouridine(34) in tRNA + L-cysteinyl-[protein] + A + AMP + diphosphate + H(+). Its function is as follows. Catalyzes the 2-thiolation of uridine at the wobble position (U34) of tRNA, leading to the formation of s(2)U34. This is tRNA-specific 2-thiouridylase MnmA from Bordetella parapertussis (strain 12822 / ATCC BAA-587 / NCTC 13253).